The sequence spans 122 residues: MIQSFTRLAVADNSGAKELMCIKVLGGSKRRYATLGDIIVCSVKKALPNGKIKKGQVVKAVVVRTKREVQRDNGSLIRFDENAAVILDSKKEPVGTRIFGPVGREVRYANFMKIVSLAPEVL.

The protein belongs to the universal ribosomal protein uL14 family. Part of the 50S ribosomal subunit. Forms a cluster with proteins L3 and L19. In the 70S ribosome, L14 and L19 interact and together make contacts with the 16S rRNA in bridges B5 and B8.

Functionally, binds to 23S rRNA. Forms part of two intersubunit bridges in the 70S ribosome. This Campylobacter concisus (strain 13826) protein is Large ribosomal subunit protein uL14.